Consider the following 616-residue polypeptide: Dihydroxy-acid dehydratase (616 aa).

Residue D81 participates in Mg(2+) binding. C122 is a binding site for [2Fe-2S] cluster. Mg(2+) is bound by residues D123 and K124. K124 is modified (N6-carboxylysine). Position 195 (C195) interacts with [2Fe-2S] cluster. E491 is a Mg(2+) binding site. The Proton acceptor role is filled by S517.

This sequence belongs to the IlvD/Edd family. As to quaternary structure, homodimer. [2Fe-2S] cluster serves as cofactor. The cofactor is Mg(2+).

The enzyme catalyses (2R)-2,3-dihydroxy-3-methylbutanoate = 3-methyl-2-oxobutanoate + H2O. It catalyses the reaction (2R,3R)-2,3-dihydroxy-3-methylpentanoate = (S)-3-methyl-2-oxopentanoate + H2O. It participates in amino-acid biosynthesis; L-isoleucine biosynthesis; L-isoleucine from 2-oxobutanoate: step 3/4. The protein operates within amino-acid biosynthesis; L-valine biosynthesis; L-valine from pyruvate: step 3/4. Functions in the biosynthesis of branched-chain amino acids. Catalyzes the dehydration of (2R,3R)-2,3-dihydroxy-3-methylpentanoate (2,3-dihydroxy-3-methylvalerate) into 2-oxo-3-methylpentanoate (2-oxo-3-methylvalerate) and of (2R)-2,3-dihydroxy-3-methylbutanoate (2,3-dihydroxyisovalerate) into 2-oxo-3-methylbutanoate (2-oxoisovalerate), the penultimate precursor to L-isoleucine and L-valine, respectively. This chain is Dihydroxy-acid dehydratase, found in Salmonella paratyphi A (strain ATCC 9150 / SARB42).